Reading from the N-terminus, the 432-residue chain is Homogentisate 1,2-dioxygenase (432 aa).

Fe cation contacts are provided by histidine 333, glutamate 339, and histidine 369.

This sequence belongs to the homogentisate dioxygenase family. Fe cation is required as a cofactor.

It carries out the reaction homogentisate + O2 = 4-maleylacetoacetate + H(+). It participates in amino-acid degradation; L-phenylalanine degradation; acetoacetate and fumarate from L-phenylalanine: step 4/6. In Dictyostelium discoideum (Social amoeba), this protein is Homogentisate 1,2-dioxygenase (hgd).